The following is a 250-amino-acid chain: 1-(5-phosphoribosyl)-5-[(5-phosphoribosylamino)methylideneamino] imidazole-4-carboxamide isomerase (250 aa).

Aspartate 7 acts as the Proton acceptor in catalysis. The active-site Proton donor is the aspartate 129.

The protein belongs to the HisA/HisF family.

The protein resides in the cytoplasm. It carries out the reaction 1-(5-phospho-beta-D-ribosyl)-5-[(5-phospho-beta-D-ribosylamino)methylideneamino]imidazole-4-carboxamide = 5-[(5-phospho-1-deoxy-D-ribulos-1-ylimino)methylamino]-1-(5-phospho-beta-D-ribosyl)imidazole-4-carboxamide. It participates in amino-acid biosynthesis; L-histidine biosynthesis; L-histidine from 5-phospho-alpha-D-ribose 1-diphosphate: step 4/9. In Shewanella denitrificans (strain OS217 / ATCC BAA-1090 / DSM 15013), this protein is 1-(5-phosphoribosyl)-5-[(5-phosphoribosylamino)methylideneamino] imidazole-4-carboxamide isomerase.